Reading from the N-terminus, the 306-residue chain is Small ribosomal subunit biogenesis GTPase RsgA (306 aa).

Residues 77–236 (KNELKRPNVA…IVDTPGFSKL (160 aa)) enclose the CP-type G domain. Residues 126–129 (SKID) and 179–187 (GQTGVGKST) contribute to the GTP site. Zn(2+) is bound by residues C260, C266, H268, and C274.

The protein belongs to the TRAFAC class YlqF/YawG GTPase family. RsgA subfamily. Monomer. Associates with 30S ribosomal subunit, binds 16S rRNA. Requires Zn(2+) as cofactor.

It localises to the cytoplasm. In terms of biological role, one of several proteins that assist in the late maturation steps of the functional core of the 30S ribosomal subunit. Helps release RbfA from mature subunits. May play a role in the assembly of ribosomal proteins into the subunit. Circularly permuted GTPase that catalyzes slow GTP hydrolysis, GTPase activity is stimulated by the 30S ribosomal subunit. The chain is Small ribosomal subunit biogenesis GTPase RsgA from Onion yellows phytoplasma (strain OY-M).